The sequence spans 283 residues: Thymidylate synthase (283 aa).

Position 22 (Arg-22) interacts with dUMP. The active-site Nucleophile is Cys-160. Residues 180–183 (RSCD), Asn-191, and 221–223 (HIY) contribute to the dUMP site. Asp-183 lines the (6R)-5,10-methylene-5,6,7,8-tetrahydrofolate pocket. (6R)-5,10-methylene-5,6,7,8-tetrahydrofolate is bound at residue Ser-282.

Belongs to the thymidylate synthase family. Bacterial-type ThyA subfamily. As to quaternary structure, homodimer.

Its subcellular location is the cytoplasm. The catalysed reaction is dUMP + (6R)-5,10-methylene-5,6,7,8-tetrahydrofolate = 7,8-dihydrofolate + dTMP. It participates in pyrimidine metabolism; dTTP biosynthesis. Functionally, catalyzes the reductive methylation of 2'-deoxyuridine-5'-monophosphate (dUMP) to 2'-deoxythymidine-5'-monophosphate (dTMP) while utilizing 5,10-methylenetetrahydrofolate (mTHF) as the methyl donor and reductant in the reaction, yielding dihydrofolate (DHF) as a by-product. This enzymatic reaction provides an intracellular de novo source of dTMP, an essential precursor for DNA biosynthesis. The chain is Thymidylate synthase from Vibrio atlanticus (strain LGP32) (Vibrio splendidus (strain Mel32)).